Here is a 282-residue protein sequence, read N- to C-terminus: Bifunctional protein FolD (282 aa).

Residues asparagine 165–serine 167, serine 190, and isoleucine 231 each bind NADP(+).

Belongs to the tetrahydrofolate dehydrogenase/cyclohydrolase family. In terms of assembly, homodimer.

It carries out the reaction (6R)-5,10-methylene-5,6,7,8-tetrahydrofolate + NADP(+) = (6R)-5,10-methenyltetrahydrofolate + NADPH. The enzyme catalyses (6R)-5,10-methenyltetrahydrofolate + H2O = (6R)-10-formyltetrahydrofolate + H(+). Its pathway is one-carbon metabolism; tetrahydrofolate interconversion. Its function is as follows. Catalyzes the oxidation of 5,10-methylenetetrahydrofolate to 5,10-methenyltetrahydrofolate and then the hydrolysis of 5,10-methenyltetrahydrofolate to 10-formyltetrahydrofolate. The protein is Bifunctional protein FolD of Clostridium botulinum (strain Langeland / NCTC 10281 / Type F).